A 315-amino-acid polypeptide reads, in one-letter code: Transcription antitermination protein NusB (315 aa).

The interval 296–315 is disordered; sequence SANFDTKSAELNDADEKSQD. Residues 302-315 show a composition bias toward basic and acidic residues; sequence KSAELNDADEKSQD.

Belongs to the NusB family.

Involved in transcription antitermination. Required for transcription of ribosomal RNA (rRNA) genes. Binds specifically to the boxA antiterminator sequence of the ribosomal RNA (rrn) operons. In Psychrobacter cryohalolentis (strain ATCC BAA-1226 / DSM 17306 / VKM B-2378 / K5), this protein is Transcription antitermination protein NusB.